Reading from the N-terminus, the 332-residue chain is Phosphoribosylformylglycinamidine cyclo-ligase (332 aa).

The protein belongs to the AIR synthase family.

Its subcellular location is the cytoplasm. It catalyses the reaction 2-formamido-N(1)-(5-O-phospho-beta-D-ribosyl)acetamidine + ATP = 5-amino-1-(5-phospho-beta-D-ribosyl)imidazole + ADP + phosphate + H(+). Its pathway is purine metabolism; IMP biosynthesis via de novo pathway; 5-amino-1-(5-phospho-D-ribosyl)imidazole from N(2)-formyl-N(1)-(5-phospho-D-ribosyl)glycinamide: step 2/2. The chain is Phosphoribosylformylglycinamidine cyclo-ligase from Clostridium acetobutylicum (strain ATCC 824 / DSM 792 / JCM 1419 / IAM 19013 / LMG 5710 / NBRC 13948 / NRRL B-527 / VKM B-1787 / 2291 / W).